A 467-amino-acid chain; its full sequence is Mothers against decapentaplegic homolog 9 (467 aa).

The MH1 domain occupies 16 to 140 (PAVKRLLGWK…YRRVETPVLP (125 aa)). Zn(2+)-binding residues include cysteine 68, cysteine 113, cysteine 125, and histidine 130. The interval 174–246 (NATYPDSFQQ…SETQSGQPVD (73 aa)) is disordered. A compositionally biased stretch (low complexity) spans 205–220 (SYPHSPGSPSEPESPY). One can recognise an MH2 domain in the interval 273–467 (WCSVAYYELN…SPHNPISSVS (195 aa)).

The protein belongs to the dwarfin/SMAD family. Interaction with the co-SMAD SMAD4. Interacts with PEBP2-alpha subunit. Interacts with RANBP3L. Phosphorylated on serine by BMP (bone morphogenetic proteins) type 1 receptor kinase. Expressed in heart, brain, placenta, lung, skeletal muscle, prostate, testis, ovary and small intestine. Also expressed in fetal brain, lung and kidney.

The protein localises to the cytoplasm. Its subcellular location is the nucleus. Its function is as follows. Transcriptional modulator activated by BMP (bone morphogenetic proteins) type 1 receptor kinase. SMAD9 is a receptor-regulated SMAD (R-SMAD). This Homo sapiens (Human) protein is Mothers against decapentaplegic homolog 9 (SMAD9).